Here is a 601-residue protein sequence, read N- to C-terminus: Coronin-like protein crn1 (601 aa).

WD repeat units lie at residues 79–119, 132–172, 174–213, 220–260, and 266–306; these read GHTA…TVME, GHSR…AHVS, KMDVMCQSMSFNADGTRLVTTSRDKKVRVWDPRTDKPVSV, AKNP…EPIG, and DTGS…FHYL. Disordered regions lie at residues 361–386 and 407–540; these read SDIYPPAPSGKPSLTAEEWASGKDAQ and SATV…VEEK. Basic and acidic residues-rich tracts occupy residues 419-429, 437-453, and 462-495; these read KHNEEKVETPK, KPKESAEEQKPSKEPEV, and KVEEPSKKRDEDNHQKEETVTQPKREKTPVEKSF. Residues Ser-500 and Ser-501 each carry the phosphoserine modification. Over residues 507–526 the composition is skewed to basic and acidic residues; that stretch reads EDVKKEPSEEKKLEVSDEAP. Ser-553 carries the phosphoserine modification. Residues 556–600 are a coiled coil; sequence NLADLNKRFEGFEKRYEEELAIRDWKIAQLEDKLAKLTEAIKEKC.

It belongs to the WD repeat coronin family. In terms of assembly, binds to F-actin.

This chain is Coronin-like protein crn1 (crn1), found in Schizosaccharomyces pombe (strain 972 / ATCC 24843) (Fission yeast).